Consider the following 404-residue polypeptide: Cysteine desulfurase IscS (404 aa).

Pyridoxal 5'-phosphate-binding positions include 75–76 (AT), Asn-155, Gln-183, and 203–205 (SGH). At Lys-206 the chain carries N6-(pyridoxal phosphate)lysine. Pyridoxal 5'-phosphate is bound at residue Thr-243. Catalysis depends on Cys-328, which acts as the Cysteine persulfide intermediate. Cys-328 is a [2Fe-2S] cluster binding site.

It belongs to the class-V pyridoxal-phosphate-dependent aminotransferase family. NifS/IscS subfamily. As to quaternary structure, homodimer. Forms a heterotetramer with IscU, interacts with other sulfur acceptors. Requires pyridoxal 5'-phosphate as cofactor.

It is found in the cytoplasm. It catalyses the reaction (sulfur carrier)-H + L-cysteine = (sulfur carrier)-SH + L-alanine. It participates in cofactor biosynthesis; iron-sulfur cluster biosynthesis. Functionally, master enzyme that delivers sulfur to a number of partners involved in Fe-S cluster assembly, tRNA modification or cofactor biosynthesis. Catalyzes the removal of elemental sulfur and selenium atoms from cysteine and selenocysteine to produce alanine. Functions as a sulfur delivery protein for Fe-S cluster synthesis onto IscU, an Fe-S scaffold assembly protein, as well as other S acceptor proteins. Also functions as a selenium delivery protein in the pathway for the biosynthesis of selenophosphate. This is Cysteine desulfurase IscS from Salmonella paratyphi C (strain RKS4594).